We begin with the raw amino-acid sequence, 182 residues long: Peptide deformylase (182 aa).

Fe cation-binding residues include C100 and H142. Residue E143 is part of the active site. H146 is a binding site for Fe cation.

It belongs to the polypeptide deformylase family. Requires Fe(2+) as cofactor.

It carries out the reaction N-terminal N-formyl-L-methionyl-[peptide] + H2O = N-terminal L-methionyl-[peptide] + formate. In terms of biological role, removes the formyl group from the N-terminal Met of newly synthesized proteins. Requires at least a dipeptide for an efficient rate of reaction. N-terminal L-methionine is a prerequisite for activity but the enzyme has broad specificity at other positions. The sequence is that of Peptide deformylase from Bartonella bacilliformis (strain ATCC 35685 / KC583 / Herrer 020/F12,63).